A 215-amino-acid polypeptide reads, in one-letter code: Small ribosomal subunit protein uS5 (215 aa).

Positions 1-12 (MSGTQRRGGGAG) are enriched in gly residues. Residues 1-31 (MSGTQRRGGGAGGERRGRDNRRGQNDRNRNQ) are disordered. Residues 13–31 (GERRGRDNRRGQNDRNRNQ) are compositionally biased toward basic and acidic residues. The S5 DRBM domain occupies 34–97 (YLERVVAINR…EEAKKHFFKV (64 aa)).

Belongs to the universal ribosomal protein uS5 family. Part of the 30S ribosomal subunit. Contacts proteins S4 and S8.

Its function is as follows. With S4 and S12 plays an important role in translational accuracy. Located at the back of the 30S subunit body where it stabilizes the conformation of the head with respect to the body. This chain is Small ribosomal subunit protein uS5, found in Cutibacterium acnes (strain DSM 16379 / KPA171202) (Propionibacterium acnes).